The sequence spans 247 residues: UPF0612 protein P20C8.01c (247 aa).

Coiled-coil stretches lie at residues Ile-27 to Glu-63 and Asp-138 to Ser-225.

The protein belongs to the UPF0612 family.

The protein resides in the cytoplasm. The protein is UPF0612 protein P20C8.01c of Schizosaccharomyces pombe (strain 972 / ATCC 24843) (Fission yeast).